We begin with the raw amino-acid sequence, 444 residues long: ATP-dependent protease ATPase subunit HslU (444 aa).

ATP is bound by residues isoleucine 18, glycine 60–glutamate 65, aspartate 256, glutamate 321, and arginine 393.

It belongs to the ClpX chaperone family. HslU subfamily. As to quaternary structure, a double ring-shaped homohexamer of HslV is capped on each side by a ring-shaped HslU homohexamer. The assembly of the HslU/HslV complex is dependent on binding of ATP.

The protein resides in the cytoplasm. ATPase subunit of a proteasome-like degradation complex; this subunit has chaperone activity. The binding of ATP and its subsequent hydrolysis by HslU are essential for unfolding of protein substrates subsequently hydrolyzed by HslV. HslU recognizes the N-terminal part of its protein substrates and unfolds these before they are guided to HslV for hydrolysis. This is ATP-dependent protease ATPase subunit HslU from Buchnera aphidicola subsp. Baizongia pistaciae (strain Bp).